The sequence spans 365 residues: Probable L-tyrosine/L-aspartate decarboxylase (365 aa).

Position 224 is an N6-(pyridoxal phosphate)lysine (Lys224).

This sequence belongs to the group II decarboxylase family. MfnA subfamily. Pyridoxal 5'-phosphate serves as cofactor.

It carries out the reaction L-tyrosine + H(+) = tyramine + CO2. The enzyme catalyses L-aspartate + H(+) = beta-alanine + CO2. Its pathway is cofactor biosynthesis; methanofuran biosynthesis. It participates in cofactor biosynthesis; coenzyme A biosynthesis. Its function is as follows. Catalyzes the decarboxylation of L-tyrosine to produce tyramine for methanofuran biosynthesis. Can also catalyze the decarboxylation of L-aspartate to produce beta-alanine for coenzyme A (CoA) biosynthesis. This chain is Probable L-tyrosine/L-aspartate decarboxylase, found in Methanoregula boonei (strain DSM 21154 / JCM 14090 / 6A8).